A 137-amino-acid polypeptide reads, in one-letter code: Large ribosomal subunit protein uL16 (137 aa).

It belongs to the universal ribosomal protein uL16 family. Part of the 50S ribosomal subunit.

Functionally, binds 23S rRNA and is also seen to make contacts with the A and possibly P site tRNAs. The polypeptide is Large ribosomal subunit protein uL16 (Chelativorans sp. (strain BNC1)).